The following is a 262-amino-acid chain: MKRKTVWKIWITLALIALLSITALAGCSSESSTTNKEDGAKSTETSAGTNTLEKIKKRGKLIVGVKYDLNLFGLKNPETGKVEGFDIDIAKGLAKKILGDENKIELKEVTSKTRIPMLNNGEIDAIIGTMTITEERKKEVDFSDVYFMAGQSLLVKKDSKINSVKDLKKGMTVLTAKGSTSAQNIRKVAPEVNVLEFENYAEAFTALKAGQGDALTTDNALLWGMAKQDPNYRVLDETFSKEPYGIGSAKETKNYCKSLTNT.

An N-terminal signal peptide occupies residues 1–26 (MKRKTVWKIWITLALIALLSITALAG). C27 carries the N-palmitoyl cysteine lipid modification. C27 is lipidated: S-diacylglycerol cysteine.

Belongs to the bacterial solute-binding protein 3 family.

It localises to the cell membrane. Involved in glutamine-transport system. Interacts with the glutamine-transport system GlnPQ. The polypeptide is Glutamine-binding protein (glnH) (Geobacillus stearothermophilus (Bacillus stearothermophilus)).